We begin with the raw amino-acid sequence, 126 residues long: MSTTRRRRPALVALVTIAACGCLALGWWQWTRFQSASGTFQNLGYALQWPLFAGFCLYTYHNFVRYEESPPQPRHMNCIAEIPPELLPARPKPEQQPPDDPALRKYNTYLAELAKQDAENHNRTTT.

The first 19 residues, 1 to 19 (MSTTRRRRPALVALVTIAA), serve as a signal peptide directing secretion. A lipid anchor (N-palmitoyl cysteine) is attached at C20. C20 carries S-diacylglycerol cysteine lipidation. The chain crosses the membrane as a helical span at residues 44–64 (GYALQWPLFAGFCLYTYHNFV).

This sequence to M.tuberculosis Rv1343c.

Its subcellular location is the cell membrane. This is Putative lipoprotein LprD (lprD) from Mycobacterium leprae (strain TN).